A 68-amino-acid polypeptide reads, in one-letter code: Beta-defensin 1 (68 aa).

An N-terminal signal peptide occupies residues 1-21 (MRTSYLLLFTLCLLLSEMASG). Positions 22 to 32 (DNFLTGLGHRS) are excised as a propeptide. 3 disulfide bridges follow: C37/C66, C44/C59, and C49/C67.

This sequence belongs to the beta-defensin family. Monomer. Homodimer.

Its subcellular location is the secreted. The protein resides in the membrane. Functionally, has bactericidal activity. May act as a ligand for C-C chemokine receptor CCR6. Positively regulates the sperm motility and bactericidal activity in a CCR6-dependent manner. Binds to CCR6 and triggers Ca2+ mobilization in the sperm which is important for its motility. This Allochrocebus preussi (Preuss's monkey) protein is Beta-defensin 1 (DEFB1).